Here is a 619-residue protein sequence, read N- to C-terminus: Pescadillo homolog (619 aa).

The tract at residues 303-324 (ADKDQKDQDTIEDAEEVTEPTV) is disordered. The span at 312–324 (TIEDAEEVTEPTV) shows a compositional bias: acidic residues. One can recognise a BRCT domain in the interval 353-452 (PTSQLFSKFI…ELVSVGDYAP (100 aa)). The segment at 456–567 (LPPHLSPWGD…STKAALTPEE (112 aa)) is disordered. Coiled-coil stretches lie at residues 472–560 (NAKA…ASTK) and 588–619 (MQYG…LKDV). A compositionally biased stretch (acidic residues) spans 480–522 (EAEEEEEEEEEDEEEEEEEEEIEVADGDEDQDDEEEEEIEDED). The span at 523–539 (LKAQKELEMEVAGKKFS) shows a compositional bias: basic and acidic residues.

Belongs to the pescadillo family. In terms of assembly, component of the NOP7 complex, composed of ERB1, NOP7 and YTM1. The complex is held together by ERB1, which interacts with NOP7 via its N-terminal domain and with YTM1 via a high-affinity interaction between the seven-bladed beta-propeller domains of the 2 proteins. The NOP7 complex associates with the 66S pre-ribosome.

The protein resides in the nucleus. It localises to the nucleolus. Its subcellular location is the nucleoplasm. Its function is as follows. Component of the NOP7 complex, which is required for maturation of the 25S and 5.8S ribosomal RNAs and formation of the 60S ribosome. This chain is Pescadillo homolog, found in Lodderomyces elongisporus (strain ATCC 11503 / CBS 2605 / JCM 1781 / NBRC 1676 / NRRL YB-4239) (Yeast).